Consider the following 253-residue polypeptide: MTEPLETELYLSSEKDELFEKGPWPKPFAFNAEVVKVFDNMVCRSVPLYREVVAGAVHWTRAYYQPKTRIIDIGCSTGTFLELLGRFLKQPAILVGIDNSSDMLDKAKEKLAQVEQIHQIELICESAENCSFEKSSVVVMNYTLQFLSLPQRQKLLRAIYQGLVPGGLLFISEKIRSDCPQFQETITHHYEAFKAKNGYAQNEIERKKEALENVLIPLSEAEQLQMLKQSGFSYIESLIKLHNFVSFVAFKSD.

S-adenosyl-L-methionine-binding positions include Y49, 74-76 (GCS), 98-99 (DN), and N141.

This sequence belongs to the class I-like SAM-binding methyltransferase superfamily. Cx-SAM synthase family.

The catalysed reaction is prephenate + S-adenosyl-L-methionine = carboxy-S-adenosyl-L-methionine + 3-phenylpyruvate + H2O. Catalyzes the conversion of S-adenosyl-L-methionine (SAM) to carboxy-S-adenosyl-L-methionine (Cx-SAM). The protein is Carboxy-S-adenosyl-L-methionine synthase of Trichodesmium erythraeum (strain IMS101).